The following is a 274-amino-acid chain: Ribosome biogenesis protein UTP30 (274 aa).

It belongs to the universal ribosomal protein uL1 family. Highly divergent. Component of the 90S pre-ribosomes. Interacts with FAF1.

It is found in the nucleus. It localises to the nucleolus. In terms of biological role, involved in rRNA-processing and ribosome biosynthesis. The polypeptide is Ribosome biogenesis protein UTP30 (UTP30) (Saccharomyces cerevisiae (strain ATCC 204508 / S288c) (Baker's yeast)).